The sequence spans 323 residues: 1D-myo-inositol 2-acetamido-2-deoxy-alpha-D-glucopyranoside deacetylase (323 aa).

Residues H28, D31, and H163 each coordinate Zn(2+).

Belongs to the MshB deacetylase family. Zn(2+) is required as a cofactor.

It catalyses the reaction 1D-myo-inositol 2-acetamido-2-deoxy-alpha-D-glucopyranoside + H2O = 1D-myo-inositol 2-amino-2-deoxy-alpha-D-glucopyranoside + acetate. In terms of biological role, catalyzes the deacetylation of 1D-myo-inositol 2-acetamido-2-deoxy-alpha-D-glucopyranoside (GlcNAc-Ins) in the mycothiol biosynthesis pathway. In Streptomyces scabiei (strain 87.22), this protein is 1D-myo-inositol 2-acetamido-2-deoxy-alpha-D-glucopyranoside deacetylase.